Here is a 454-residue protein sequence, read N- to C-terminus: ESX-1 secretion-associated protein EspB (454 aa).

Disordered stretches follow at residues arginine 17–threonine 40, glycine 82–serine 128, and alanine 391–lysine 454. Positions alanine 391–lysine 422 are enriched in gly residues.

Belongs to the EspB family. Post-translationally, cleaved at close to the C-terminus during secretion.

It is found in the secreted. In Mycobacterium marinum (strain ATCC BAA-535 / M), this protein is ESX-1 secretion-associated protein EspB.